The sequence spans 390 residues: Phosphopentomutase (390 aa).

Residues D9, D283, H288, D324, H325, and H336 each contribute to the Mn(2+) site.

Belongs to the phosphopentomutase family. It depends on Mn(2+) as a cofactor.

The protein resides in the cytoplasm. The catalysed reaction is 2-deoxy-alpha-D-ribose 1-phosphate = 2-deoxy-D-ribose 5-phosphate. The enzyme catalyses alpha-D-ribose 1-phosphate = D-ribose 5-phosphate. The protein operates within carbohydrate degradation; 2-deoxy-D-ribose 1-phosphate degradation; D-glyceraldehyde 3-phosphate and acetaldehyde from 2-deoxy-alpha-D-ribose 1-phosphate: step 1/2. Isomerase that catalyzes the conversion of deoxy-ribose 1-phosphate (dRib-1-P) and ribose 1-phosphate (Rib-1-P) to deoxy-ribose 5-phosphate (dRib-5-P) and ribose 5-phosphate (Rib-5-P), respectively. This is Phosphopentomutase from Thermotoga maritima (strain ATCC 43589 / DSM 3109 / JCM 10099 / NBRC 100826 / MSB8).